Reading from the N-terminus, the 286-residue chain is MIYQTDNDKLYRYLFKDRAVRGEWVRLNKTFTDTLNSHEYPRIVRNLLGEMMVATNLLTATLKFKGNITIQIQGNGPLKLLLVNGSDSQQIRALARLQDDVYDDITLSELVGNGILVITIAPTNGERYQGVIALDKPTIAECLEDYFIRSEQLQTQLLIRSGEYEGKPVAAGLLLQIMPDGTGSQEDFEHLATLAATVKNEELFGLTAEELLYRLYHEETVEIYPPSAVEFHCGCSLERSGSALLLISDDEIENILTEHGGSIDMQCECCGTHYFFDKKTIEKLKA.

2 disulfide bridges follow: Cys233–Cys235 and Cys267–Cys270.

Belongs to the HSP33 family. Post-translationally, under oxidizing conditions two disulfide bonds are formed involving the reactive cysteines. Under reducing conditions zinc is bound to the reactive cysteines and the protein is inactive.

Its subcellular location is the cytoplasm. Functionally, redox regulated molecular chaperone. Protects both thermally unfolding and oxidatively damaged proteins from irreversible aggregation. Plays an important role in the bacterial defense system toward oxidative stress. This chain is 33 kDa chaperonin, found in Histophilus somni (strain 2336) (Haemophilus somnus).